The following is a 359-amino-acid chain: Outer membrane protein P2 (359 aa).

Positions 1 to 20 are cleaved as a signal peptide; it reads MKKTLAALIVGAFAASAANA.

It belongs to the Gram-negative porin family. As to quaternary structure, homotrimer.

It is found in the cell outer membrane. In terms of biological role, forms pores that allow passive diffusion of small molecules across the outer membrane. The sequence is that of Outer membrane protein P2 (ompP2) from Haemophilus influenzae (strain ATCC 51907 / DSM 11121 / KW20 / Rd).